The following is a 333-amino-acid chain: Protein RecA (333 aa).

69-76 lines the ATP pocket; it reads GPESSGKT.

The protein belongs to the RecA family.

The protein localises to the cytoplasm. Functionally, can catalyze the hydrolysis of ATP in the presence of single-stranded DNA, the ATP-dependent uptake of single-stranded DNA by duplex DNA, and the ATP-dependent hybridization of homologous single-stranded DNAs. It interacts with LexA causing its activation and leading to its autocatalytic cleavage. This is Protein RecA from Mesoplasma florum (strain ATCC 33453 / NBRC 100688 / NCTC 11704 / L1) (Acholeplasma florum).